The chain runs to 467 residues: Probable lipase C1672.09 (467 aa).

Topologically, residues 1-17 are cytoplasmic; that stretch reads MIQLPFIQRLKWEEYMA. The helical; Signal-anchor for type II membrane protein transmembrane segment at 18-38 threads the bilayer; that stretch reads LFLGFFFVIFEKLLSCLAFMI. The Lumenal segment spans residues 39–467; the sequence is HNTLGLFYRS…NHIAPRNKPI (429 aa). Ser66 bears the Phosphoserine mark. Residues 127–421 form the AB hydrolase-1 domain; sequence PVVYCHHGLL…SYEHLDMIWA (295 aa). The active-site Nucleophile is the Ser222. N-linked (GlcNAc...) asparagine glycans are attached at residues Asn311 and Asn316. Active-site charge relay system residues include Asp389 and His415. The span at 440-457 shows a compositional bias: basic and acidic residues; it reads HHPPEHEENDKENREIQK. Positions 440–467 are disordered; it reads HHPPEHEENDKENREIQKNHIAPRNKPI.

Belongs to the AB hydrolase superfamily. Lipase family.

The protein localises to the cytoplasm. The protein resides in the membrane. In terms of biological role, probable lipase. This chain is Probable lipase C1672.09, found in Schizosaccharomyces pombe (strain 972 / ATCC 24843) (Fission yeast).